The chain runs to 117 residues: Large ribosomal subunit protein bL20c (117 aa).

The protein belongs to the bacterial ribosomal protein bL20 family.

It is found in the plastid. The protein localises to the chloroplast. Its function is as follows. Binds directly to 23S ribosomal RNA and is necessary for the in vitro assembly process of the 50S ribosomal subunit. It is not involved in the protein synthesizing functions of that subunit. In Nasturtium officinale (Watercress), this protein is Large ribosomal subunit protein bL20c.